The primary structure comprises 343 residues: Geranylgeranyl pyrophosphate synthase (343 aa).

Over residues 1–12 the composition is skewed to basic and acidic residues; sequence MAYTVEPREHSK. Positions 1–26 are disordered; sequence MAYTVEPREHSKNTTLPTVAMPPSPP. Residues lysine 69, arginine 72, and histidine 101 each contribute to the isopentenyl diphosphate site. Positions 108 and 112 each coordinate Mg(2+). Arginine 117 contacts dimethylallyl diphosphate. Arginine 118 contacts isopentenyl diphosphate. The dimethylallyl diphosphate site is built by threonine 196 and glutamine 229. Aspartate 232 contributes to the Mg(2+) binding site. 3 residues coordinate dimethylallyl diphosphate: asparagine 236, lysine 246, and lysine 256.

The protein belongs to the FPP/GGPP synthase family. Mg(2+) is required as a cofactor.

The catalysed reaction is isopentenyl diphosphate + dimethylallyl diphosphate = (2E)-geranyl diphosphate + diphosphate. The enzyme catalyses isopentenyl diphosphate + (2E)-geranyl diphosphate = (2E,6E)-farnesyl diphosphate + diphosphate. It carries out the reaction isopentenyl diphosphate + (2E,6E)-farnesyl diphosphate = (2E,6E,10E)-geranylgeranyl diphosphate + diphosphate. It functions in the pathway mycotoxin biosynthesis. Its function is as follows. Geranylgeranyl pyrophosphate synthase; part of the gene cluster that mediates the biosynthesis of aphidicolin, a specific inhibitor of eukaryotic DNA synthesis and DNA polymerase alpha. The geranylgeranyl pyrophosphate synthase GGS is required for supplying a sufficient amount of geranylgeranyl diphosphate (GGDP), the general precursor of diterpenes. The diterpene synthase ACS then catalyzes the conversion of geranylgeranyl diphosphate to aphidicolan-16-beta-ol via the intermediate syn-copalyldiphosphate (syn-CDP). In addition to aphidicolan-16-beta-ol, the enzyme also produces low levels of amphidicol-15-ene and amphidicol-16-ene. The cytochrome P450 monooxygenase P450-2 then catalyzes the two-step hydroxylation from aphidicolan-16-beta-ol to 3-deoxyaphidicolin via a 17,3-deoxyaphidicolin intermediate. Finally, the cytochrome P450 monooxygenase P450-1 converts 3-deoxyaphidicolin to aphidicolin. The polypeptide is Geranylgeranyl pyrophosphate synthase (GGS) (Neocamarosporium betae (Beet black rot fungus)).